The primary structure comprises 361 residues: 5-formaminoimidazole-4-carboxamide-1-(beta)-D-ribofuranosyl 5'-monophosphate synthetase (361 aa).

5-amino-1-(5-phospho-beta-D-ribosyl)imidazole-4-carboxamide-binding residues include His-27 and Ser-94. The region spanning 116–348 (RAILRWEAER…MGQRIAKEIK (233 aa)) is the ATP-grasp domain. ATP-binding positions include 146–208 (PDDI…ANYC) and Glu-230. Position 258 (Asn-258) interacts with 5-amino-1-(5-phospho-beta-D-ribosyl)imidazole-4-carboxamide. Mg(2+)-binding residues include Gln-297 and Glu-310.

Belongs to the phosphohexose mutase family. Mg(2+) serves as cofactor. Mn(2+) is required as a cofactor.

The catalysed reaction is 5-amino-1-(5-phospho-beta-D-ribosyl)imidazole-4-carboxamide + formate + ATP = 5-formamido-1-(5-phospho-D-ribosyl)imidazole-4-carboxamide + ADP + phosphate. It functions in the pathway purine metabolism; IMP biosynthesis via de novo pathway; 5-formamido-1-(5-phospho-D-ribosyl)imidazole-4-carboxamide from 5-amino-1-(5-phospho-D-ribosyl)imidazole-4-carboxamide (formate route): step 1/1. In terms of biological role, catalyzes the ATP- and formate-dependent formylation of 5-aminoimidazole-4-carboxamide-1-beta-d-ribofuranosyl 5'-monophosphate (AICAR) to 5-formaminoimidazole-4-carboxamide-1-beta-d-ribofuranosyl 5'-monophosphate (FAICAR) in the absence of folates. The sequence is that of 5-formaminoimidazole-4-carboxamide-1-(beta)-D-ribofuranosyl 5'-monophosphate synthetase from Methanococcus maripaludis (strain C6 / ATCC BAA-1332).